Here is a 132-residue protein sequence, read N- to C-terminus: Riboflavin kinase (132 aa).

10 to 15 (GLGEGR) serves as a coordination point for CDP. Positions 39 and 41 each coordinate Mg(2+). FMN is bound by residues threonine 95, tyrosine 96, and glutamate 103. 108–111 (MKLR) is a CDP binding site.

In terms of assembly, monomer. It depends on Mg(2+) as a cofactor.

It carries out the reaction riboflavin + CTP = CDP + FMN + H(+). It participates in cofactor biosynthesis; FMN biosynthesis; FMN from riboflavin (CTP route): step 1/1. Catalyzes the CTP-dependent phosphorylation of riboflavin (vitamin B2) to form flavin mononucleotide (FMN). Can also utilize UTP as the phosphate donor, although less efficiently, and it is unclear if ATP and GTP can also serve as substrates or not. In Methanocaldococcus jannaschii (strain ATCC 43067 / DSM 2661 / JAL-1 / JCM 10045 / NBRC 100440) (Methanococcus jannaschii), this protein is Riboflavin kinase (ribK).